A 363-amino-acid chain; its full sequence is Mitogen-activated protein kinase 13 (363 aa).

Positions 33–319 (IPPIEPIGRG…VDEALKQPYL (287 aa)) constitute a Protein kinase domain. Residues 39-47 (IGRGAYGIV) and Lys-62 contribute to the ATP site. The Proton acceptor role is filled by Asp-159. Thr-191 bears the Phosphothreonine mark. The TXY motif lies at 191–193 (TEY). Residue Tyr-193 is modified to Phosphotyrosine. A Phosphothreonine modification is found at Thr-196.

It belongs to the protein kinase superfamily. CMGC Ser/Thr protein kinase family. MAP kinase subfamily. Interacts with MKK6. In terms of processing, dually phosphorylated on Thr-191 and Tyr-193, which activates the enzyme. As to expression, expressed in roots, stems and flower buds.

It carries out the reaction L-seryl-[protein] + ATP = O-phospho-L-seryl-[protein] + ADP + H(+). It catalyses the reaction L-threonyl-[protein] + ATP = O-phospho-L-threonyl-[protein] + ADP + H(+). Activated by threonine and tyrosine phosphorylation. Activated by the MAP kinase kinase MKK6 in vitro. Its function is as follows. MKK6-MPK13 module positively regulates lateral root formation. This Arabidopsis thaliana (Mouse-ear cress) protein is Mitogen-activated protein kinase 13 (MPK13).